Reading from the N-terminus, the 513-residue chain is ATP synthase subunit alpha (513 aa).

ATP is bound at residue 169-176 (GDRQTGKT).

The protein belongs to the ATPase alpha/beta chains family. F-type ATPases have 2 components, CF(1) - the catalytic core - and CF(0) - the membrane proton channel. CF(1) has five subunits: alpha(3), beta(3), gamma(1), delta(1), epsilon(1). CF(0) has three main subunits: a(1), b(2) and c(9-12). The alpha and beta chains form an alternating ring which encloses part of the gamma chain. CF(1) is attached to CF(0) by a central stalk formed by the gamma and epsilon chains, while a peripheral stalk is formed by the delta and b chains.

It localises to the cell inner membrane. It catalyses the reaction ATP + H2O + 4 H(+)(in) = ADP + phosphate + 5 H(+)(out). Its function is as follows. Produces ATP from ADP in the presence of a proton gradient across the membrane. The alpha chain is a regulatory subunit. In Ralstonia pickettii (strain 12J), this protein is ATP synthase subunit alpha.